The chain runs to 260 residues: Transcription factor MYB4 (260 aa).

HTH myb-type domains follow at residues 12–64 and 65–119; these read AVEV…LNYL and RPGI…SKRS. 2 DNA-binding regions (H-T-H motif) span residues 40–64 and 92–115; these read WRML…LNYL and WSII…NTHL.

It localises to the nucleus. Transcription activator involved in the spatiotemporal regulation of flavonoid biosynthesis specifically in the corms of Montbretia. Activates the promoters of enzymes involved in the biosynthesis of the flavonol myricetin and the flavonol-glycoside montbretin A (MbA). MbA is a potent inhibitor of human pancreatic alpha-amylase and is being developed as drug candidate to treat type-2 diabetes. In Crocosmia x crocosmiiflora (Montbretia), this protein is Transcription factor MYB4.